Consider the following 393-residue polypeptide: Purine permease 14 (393 aa).

The residue at position 2 (A2) is an N-acetylalanine. 10 consecutive transmembrane segments (helical) span residues 46–66 (WPTI…AKLL), 90–110 (TQSL…LIFI), 133–153 (LAVI…LAAM), 161–181 (GVFT…AAFI), 189–209 (WVVI…SSSF), 225–245 (WAAL…QNVF), 268–288 (VIIF…LIAG), 308–328 (VMAM…IVGL), 339–359 (VISV…FNFM), and 363–383 (FDAF…AYFF).

Belongs to the purine permeases (TC 2.A.7.14) family. As to expression, expressed in seedlings, leaves, embryos, ovules, seeds and the root and shoot meristems. In heart-stage embryos, detected in cells that failed to respond to cytokinins, including the prospective cotyledons.

The protein resides in the cell membrane. Functionally, purine permease implicated in ATP-dependent cytokinin translocation that controls the spatiotemporal landscape of cytokinin signaling. Depletes ligands from the apoplast, which leads to a suppression of the cytokinin response. The polypeptide is Purine permease 14 (Arabidopsis thaliana (Mouse-ear cress)).